We begin with the raw amino-acid sequence, 313 residues long: Epoxide hydrolase 1 (313 aa).

In terms of domain architecture, AB hydrolase-1 spans 25–299 (PAVLFLHGFP…AAHFINQEKA (275 aa)). Catalysis depends on Asp-100, which acts as the Nucleophile. Tyr-149 serves as a coordination point for an epoxide. Tyr-227 serves as the catalytic Proton donor. The Proton acceptor role is filled by His-292.

Belongs to the AB hydrolase superfamily. Epoxide hydrolase family. As to quaternary structure, homodimer. As to expression, highly expressed in fruits 15 days after anthesis (15-DAA).

It catalyses the reaction an epoxide + H2O = an ethanediol. The enzyme catalyses (24S)-24,25-epoxycucurbitadienol + H2O = (24R)-24,25-dihydroxycucurbitadienol. It participates in secondary metabolite biosynthesis; terpenoid biosynthesis. Its function is as follows. Epoxide hydrolase involved in the biosynthesis of cucurbitacin and mogroside tetracyclic triterpene natural products (e.g. siamenoside I and mogrosides IV, V and VI). Cucurbitacins have cytotoxic properties and exhibit deterrent taste as a defense barrier against herbivores. Mogrosides are nonsugar highly oxygenated compounds used as high-intensity zero-calorie sweeteners; they also possess pharmacological properties such as regulating immunity, lowering blood sugar and lipid levels, protecting the liver, and acting as antioxidants and antitumor agents. Catalyzes the hydrolysis of aromatic epoxide-containing substrates, such as the conversion of 24,25-epoxycucurbitadienol to 24,25-dihydroxycucurbitadienol. The polypeptide is Epoxide hydrolase 1 (Siraitia grosvenorii (Monk's fruit)).